A 229-amino-acid polypeptide reads, in one-letter code: Lactate utilization protein C (229 aa).

Belongs to the LutC/YkgG family.

Is involved in L-lactate degradation and allows cells to grow with lactate as the sole carbon source. In Shouchella clausii (strain KSM-K16) (Alkalihalobacillus clausii), this protein is Lactate utilization protein C.